Here is a 291-residue protein sequence, read N- to C-terminus: 4-hydroxy-tetrahydrodipicolinate synthase (291 aa).

Thr-45 contributes to the pyruvate binding site. The Proton donor/acceptor role is filled by Tyr-133. The active-site Schiff-base intermediate with substrate is the Lys-161. Ile-203 is a binding site for pyruvate.

The protein belongs to the DapA family. In terms of assembly, homotetramer; dimer of dimers.

Its subcellular location is the cytoplasm. It carries out the reaction L-aspartate 4-semialdehyde + pyruvate = (2S,4S)-4-hydroxy-2,3,4,5-tetrahydrodipicolinate + H2O + H(+). It participates in amino-acid biosynthesis; L-lysine biosynthesis via DAP pathway; (S)-tetrahydrodipicolinate from L-aspartate: step 3/4. Functionally, catalyzes the condensation of (S)-aspartate-beta-semialdehyde [(S)-ASA] and pyruvate to 4-hydroxy-tetrahydrodipicolinate (HTPA). This chain is 4-hydroxy-tetrahydrodipicolinate synthase, found in Teredinibacter turnerae (strain ATCC 39867 / T7901).